Reading from the N-terminus, the 848-residue chain is Coiled-coil and C2 domain-containing protein 1B (848 aa).

Basic residues predominate over residues 1-10 (MPGPRPRKGP). Disordered stretches follow at residues 1-21 (MPGP…ETAK) and 53-75 (ALTG…PLPM). The stretch at 165-193 (LQALLEERIRNYREAAASAKEAGEAAKAR) forms a coiled coil. Disordered stretches follow at residues 217–276 (EDEI…DPDP), 326–353 (VDLS…ATQG), 433–460 (DFAE…QDSV), and 476–523 (ALVD…SPSV). The span at 438–448 (PVPPGFPPIPG) shows a compositional bias: pro residues. S455 bears the Phosphoserine mark. The segment covering 476 to 485 (ALVDDDEESD) has biased composition (acidic residues). 2 stretches are compositionally biased toward low complexity: residues 487-498 (PAQAPLAKKPAQ) and 509-522 (EPKA…LSPS). S583 is subject to Phosphoserine. T586 bears the Phosphothreonine mark. Positions 600–626 (LRLSQKAEEVYAQLQKMLQEQQAKCLL) form a coiled coil. The 140-residue stretch at 666–805 (DPPSHHFELK…EKECEIREIM (140 aa)) folds into the C2 domain.

The protein belongs to the CC2D1 family. Interacts with CHMP4B.

The protein localises to the nucleus. Its function is as follows. Transcription factor that binds specifically to the DRE (dual repressor element) and represses HTR1A gene transcription in neuronal cells. This is Coiled-coil and C2 domain-containing protein 1B (Cc2d1b) from Mus musculus (Mouse).